The following is a 358-amino-acid chain: Popeye domain-containing protein 1 (358 aa).

The Extracellular segment spans residues 1–48 (MNSTESIPLAQSTVAGFTSELESLTPVPSNETTCENWREIHHLVFHVA). 2 N-linked (GlcNAc...) asparagine glycosylation sites follow: Asn-2 and Asn-30. A helical transmembrane segment spans residues 49-69 (NVCFAVGLLIPTTLHLHMILL). Residue Arg-70 is a topological domain, cytoplasmic. The helical transmembrane segment at 71 to 91 (VMLSLGCTLYVVWATLYRCAL) threads the bilayer. A topological domain (extracellular) is located at residue Asp-92. The chain crosses the membrane as a helical span at residues 93 to 113 (VMIWNSVFLGINILHLSYLLY). The segment at 93–115 (VMIWNSVFLGINILHLSYLLYKK) is required for interaction with CAV3. Over 114-358 (KKRPVKIEKE…PDALKVHQLP (245 aa)) the chain is Cytoplasmic. Residues 136 to 186 (RVPPDLFRRLTGQFCMIQTLKRGQVYATEDKTSVDDRLSILLKGRMKVSYR) are required for interaction with KCNK2. A phosphoserine mark is found at Ser-295 and Ser-318. The span at 313–323 (SSSTASLPMSS) shows a compositional bias: low complexity. The segment at 313–350 (SSSTASLPMSSPQQRASAKMKPIEEGVEDDDEVFVSPD) is disordered.

This sequence belongs to the popeye family. In terms of assembly, homodimer. Homodimerization requires the C-terminus cytoplasmic region. Interacts (via the C-terminus cytoplasmic tail) with TJP1. Interacts (via the C-terminus cytoplasmic tail) with ARHGEF25/GEFT (via the DH domain). Interacts (via the C-terminus cytoplasmic tail) with VAMP3. Interacts with KCNK2; the interaction enhances KCNK2 surface expression and is inhibited by cAMP. Interacts with CAV3. Expressed in epithelial cells, skeletal muscle, heart and intestinal smooth muscle (at protein level). Expressed in fetal and adult heart and skeletal muscle.

The protein resides in the lateral cell membrane. It is found in the cell junction. Its subcellular location is the tight junction. The protein localises to the membrane. It localises to the cell membrane. The protein resides in the sarcolemma. It is found in the caveola. Its function is as follows. Cell adhesion molecule involved in the establishment and/or maintenance of cell integrity. Involved in the formation and regulation of the tight junction (TJ) paracellular permeability barrier in epithelial cells. Plays a role in VAMP3-mediated vesicular transport and recycling of different receptor molecules through its interaction with VAMP3. Plays a role in the regulation of cell shape and movement by modulating the Rho-family GTPase activity through its interaction with ARHGEF25/GEFT. Induces primordial adhesive contact and aggregation of epithelial cells in a Ca(2+)-independent manner. Also involved in striated muscle regeneration and repair and in the regulation of cell spreading. Important for the maintenance of cardiac function. Plays a regulatory function in heart rate dynamics mediated, at least in part, through cAMP-binding and, probably, by increasing cell surface expression of the potassium channel KCNK2 and enhancing current density. Is a caveolae-associated protein important for the preservation of caveolae structural and functional integrity as well as for heart protection against ischemia injury. This chain is Popeye domain-containing protein 1, found in Mus musculus (Mouse).